The chain runs to 2710 residues: Serine/threonine-protein kinase ATR (2710 aa).

Residues 1647-2257 (TLAKASFRCQ…LWMMAAVSKS (611 aa)) form the FAT domain. A PI3K/PI4K catalytic domain is found at 2368–2680 (IADDAEILNS…GVNAAPSLPL (313 aa)). Positions 2374–2380 (ILNSLQK) are G-loop. Residues 2545 to 2553 (GLGDRHGEN) are catalytic loop. An activation loop region spans residues 2565–2589 (HVDFSCLFDKGLLLEKPEVVPFRFT). An FATC domain is found at 2678–2710 (LPLSVEGQARRLIAEAVSHSNLGKMYVWWMAWF).

The protein belongs to the PI3/PI4-kinase family. ATM subfamily.

The protein localises to the nucleus. It carries out the reaction L-seryl-[protein] + ATP = O-phospho-L-seryl-[protein] + ADP + H(+). The catalysed reaction is L-threonyl-[protein] + ATP = O-phospho-L-threonyl-[protein] + ADP + H(+). In terms of biological role, probable serine/threonine kinase. Seems to play a central role in cell-cycle regulation by transmitting DNA damage signals to downstream effectors of cell-cycle progression. May recognize the substrate consensus sequence [ST]-Q and phosphorylate histone variant H2AX to form H2AXS139ph at sites of DNA damage, thereby regulating DNA damage response mechanism. The protein is Serine/threonine-protein kinase ATR of Oryza sativa subsp. indica (Rice).